Here is a 177-residue protein sequence, read N- to C-terminus: Dual-action ribosomal maturation protein DarP (177 aa).

It belongs to the DarP family.

The protein localises to the cytoplasm. Member of a network of 50S ribosomal subunit biogenesis factors which assembles along the 30S-50S interface, preventing incorrect 23S rRNA structures from forming. Promotes peptidyl transferase center (PTC) maturation. This Histophilus somni (strain 2336) (Haemophilus somnus) protein is Dual-action ribosomal maturation protein DarP.